Here is a 570-residue protein sequence, read N- to C-terminus: Formate--tetrahydrofolate ligase (570 aa).

ATP is bound at residue 65-72 (TPHGEGKT).

The protein belongs to the formate--tetrahydrofolate ligase family.

It carries out the reaction (6S)-5,6,7,8-tetrahydrofolate + formate + ATP = (6R)-10-formyltetrahydrofolate + ADP + phosphate. It participates in one-carbon metabolism; tetrahydrofolate interconversion. This Shewanella oneidensis (strain ATCC 700550 / JCM 31522 / CIP 106686 / LMG 19005 / NCIMB 14063 / MR-1) protein is Formate--tetrahydrofolate ligase.